A 195-amino-acid chain; its full sequence is MAEYGDQYGRQTDEYGNPIRQTGEFGATGAYGANQQYGTTGTTVGYGTDQCVTTVTTGAQKTDQYGTPGTTGAYGTDQYGTTGTTGEYGTHGGGIAPGATDAGLAGGGGGHRRLGSSGSSSSEDDGQGGRRKKGIKEKIKEKLPGGGHGDDQTHPTPPGSGGYGYEHGGAAESPEHEEKKGIMDKIKEKLPGGHH.

Positions 1 to 195 are disordered; it reads MAEYGDQYGR…IKEKLPGGHH (195 aa). The span at 37-48 shows a compositional bias: low complexity; it reads YGTTGTTVGYGT. The segment covering 50-64 has biased composition (polar residues); the sequence is QCVTTVTTGAQKTDQ. A compositionally biased stretch (low complexity) spans 65-88; it reads YGTPGTTGAYGTDQYGTTGTTGEY. Basic and acidic residues-rich tracts occupy residues 136 to 153 and 173 to 195; these read KEKI…DDQT and SPEH…GGHH.

Belongs to the plant dehydrin family. Post-translationally, phosphorylated in vitro by CK2. Expressed in roots and leaves.

It localises to the cytoplasm. It is found in the nucleus. This chain is Dehydrin DHN1, found in Avicennia marina (Grey mangrove).